A 132-amino-acid polypeptide reads, in one-letter code: uncharacterized protein (132 aa).

3 helical membrane passes run 19–39 (FTWIFGAWDIPLITLLVFIFL), 58–78 (IGLRGITKKGLILVVLLVAVM), and 93–113 (LIAYFYIMNEGISILENCAAL).

Belongs to the bacteriophage holin family. Cp-1 holin subfamily.

It is found in the cell membrane. This is an uncharacterized protein from Clostridium perfringens.